Reading from the N-terminus, the 213-residue chain is Probable transaldolase (213 aa).

K83 functions as the Schiff-base intermediate with substrate in the catalytic mechanism.

It belongs to the transaldolase family. Type 3B subfamily.

It is found in the cytoplasm. It carries out the reaction D-sedoheptulose 7-phosphate + D-glyceraldehyde 3-phosphate = D-erythrose 4-phosphate + beta-D-fructose 6-phosphate. The protein operates within carbohydrate degradation; pentose phosphate pathway; D-glyceraldehyde 3-phosphate and beta-D-fructose 6-phosphate from D-ribose 5-phosphate and D-xylulose 5-phosphate (non-oxidative stage): step 2/3. Functionally, transaldolase is important for the balance of metabolites in the pentose-phosphate pathway. The protein is Probable transaldolase of Desulfitobacterium hafniense (strain DSM 10664 / DCB-2).